The following is a 302-amino-acid chain: Oligopeptide transport system permease protein OppC (302 aa).

Topologically, residues M1–A39 are cytoplasmic. The helical transmembrane segment at V40 to F62 threads the bilayer. Over T63–R102 the chain is Periplasmic. In terms of domain architecture, ABC transmembrane type-1 spans G101 to G290. A helical membrane pass occupies residues I103–L125. The Cytoplasmic portion of the chain corresponds to S126–M137. The chain crosses the membrane as a helical span at residues M138–F160. The Periplasmic portion of the chain corresponds to G161 to N163. The helical transmembrane segment at I164 to V183 threads the bilayer. The Cytoplasmic segment spans residues R184 to H213. The helical transmembrane segment at I214 to F236 threads the bilayer. Over E237 to V267 the chain is Periplasmic. The helical transmembrane segment at S268 to G290 threads the bilayer. Over D291–R302 the chain is Cytoplasmic.

This sequence belongs to the binding-protein-dependent transport system permease family. OppBC subfamily. As to quaternary structure, the complex is composed of two ATP-binding proteins (OppD and OppF), two transmembrane proteins (OppB and OppC) and a solute-binding protein (OppA).

The protein resides in the cell inner membrane. Functionally, part of the ABC transporter complex OppABCDF involved in the uptake of oligopeptides, including the cell wall murein tripeptide L-alanyl-gamma-D-glutamyl-meso-diaminopimelate. Responsible for the translocation of the substrate across the membrane. Plays an important nutritional role and is involved in the recycling of cell wall peptides. The chain is Oligopeptide transport system permease protein OppC from Salmonella typhimurium (strain LT2 / SGSC1412 / ATCC 700720).